A 722-amino-acid chain; its full sequence is Probable ATP-dependent RNA helicase DDX4 (722 aa).

Residues 1–241 (MGDEDWEAEI…GESSDTQGPK (241 aa)) form a disordered region. Composition is skewed to basic and acidic residues over residues 21 to 35 (FEKD…DKFN) and 66 to 78 (GKRD…KREN). The segment covering 150–162 (RGSFRGCRGGFGL) has biased composition (gly residues). 2 positions are modified to phosphoserine: serine 220 and serine 224. Residues 226–245 (KSEAEGGESSDTQGPKVTYI) form an interaction with RANBP9 region. Positions 286-314 (LTFEEANLCQTLNNNIAKAGYTKLTPVQK) match the Q motif motif. The Helicase ATP-binding domain maps to 317–500 (IPIILAGRDL…AEFLKSNYLF (184 aa)). 330–337 (AQTGSGKT) contacts ATP. The DEAD box signature appears at 444-447 (DEAD). Positions 528–673 (KLLEILRNIG…DVPAWLEEIA (146 aa)) constitute a Helicase C-terminal domain. Over residues 702-713 (LNTAGFSSSQAP) the composition is skewed to polar residues. The tract at residues 702-722 (LNTAGFSSSQAPNPVDDESWD) is disordered. Serine 720 carries the post-translational modification Phosphoserine.

This sequence belongs to the DEAD box helicase family. DDX4/VASA subfamily. In terms of assembly, found in a mRNP complex, at least composed of TDRD1, TDRD6, TDRD7 and DDX4. Interacts with RANBP9. Interacts with RANBP10. Interacts with PIWIL2 and MAEL. Interacts with BMAL1 and CLOCK. Interacts with Tex19.1 and, probably, Tex19.2. Interacts with RBM46.

It localises to the cytoplasm. It is found in the perinuclear region. The catalysed reaction is ATP + H2O = ADP + phosphate + H(+). ATP-dependent RNA helicase required during spermatogenesis to repress transposable elements and preventing their mobilization, which is essential for the germline integrity. Acts via the piRNA metabolic process, which mediates the repression of transposable elements during meiosis by forming complexes composed of piRNAs and Piwi proteins and governs the methylation and subsequent repression of transposons. Involved in the secondary piRNAs metabolic process, the production of piRNAs in fetal male germ cells through a ping-pong amplification cycle. Required for PIWIL2 slicing-triggered piRNA biogenesis: helicase activity enables utilization of one of the slice cleavage fragments generated by PIWIL2 and processing these pre-piRNAs into piRNAs. In Sus scrofa (Pig), this protein is Probable ATP-dependent RNA helicase DDX4 (DDX4).